We begin with the raw amino-acid sequence, 485 residues long: Ribulose bisphosphate carboxylase large chain 2 (485 aa).

Substrate is bound by residues Asn-125 and Thr-175. Residue Lys-177 is the Proton acceptor of the active site. Lys-179 lines the substrate pocket. Mg(2+)-binding residues include Lys-203, Asp-205, and Glu-206. Lys-203 is subject to N6-carboxylysine. His-295 (proton acceptor) is an active-site residue. Substrate contacts are provided by Arg-296, His-328, and Ser-380.

This sequence belongs to the RuBisCO large chain family. Type I subfamily. As to quaternary structure, heterohexadecamer of 8 large chains and 8 small chains. Requires Mg(2+) as cofactor.

The catalysed reaction is 2 (2R)-3-phosphoglycerate + 2 H(+) = D-ribulose 1,5-bisphosphate + CO2 + H2O. The enzyme catalyses D-ribulose 1,5-bisphosphate + O2 = 2-phosphoglycolate + (2R)-3-phosphoglycerate + 2 H(+). Its function is as follows. RuBisCO catalyzes two reactions: the carboxylation of D-ribulose 1,5-bisphosphate, the primary event in carbon dioxide fixation, as well as the oxidative fragmentation of the pentose substrate. Both reactions occur simultaneously and in competition at the same active site. The chain is Ribulose bisphosphate carboxylase large chain 2 from Methylibium petroleiphilum (strain ATCC BAA-1232 / LMG 22953 / PM1).